We begin with the raw amino-acid sequence, 138 residues long: Large-conductance mechanosensitive channel (138 aa).

The next 2 helical transmembrane spans lie at 19-39 (VGVI…GDVI) and 81-101 (GSFL…FLVI).

Belongs to the MscL family. Homopentamer.

It localises to the cell inner membrane. Channel that opens in response to stretch forces in the membrane lipid bilayer. May participate in the regulation of osmotic pressure changes within the cell. This chain is Large-conductance mechanosensitive channel, found in Bradyrhizobium diazoefficiens (strain JCM 10833 / BCRC 13528 / IAM 13628 / NBRC 14792 / USDA 110).